A 120-amino-acid chain; its full sequence is Large ribosomal subunit protein uL18 (120 aa).

The protein belongs to the universal ribosomal protein uL18 family. In terms of assembly, part of the 50S ribosomal subunit; part of the 5S rRNA/L5/L18/L25 subcomplex. Contacts the 5S and 23S rRNAs.

In terms of biological role, this is one of the proteins that bind and probably mediate the attachment of the 5S RNA into the large ribosomal subunit, where it forms part of the central protuberance. This Bartonella bacilliformis (strain ATCC 35685 / KC583 / Herrer 020/F12,63) protein is Large ribosomal subunit protein uL18.